The sequence spans 132 residues: UPF0102 protein LI0223 (132 aa).

This sequence belongs to the UPF0102 family.

This Lawsonia intracellularis (strain PHE/MN1-00) protein is UPF0102 protein LI0223.